Consider the following 512-residue polypeptide: Respiratory nitrate reductase 1 beta chain (512 aa).

3 4Fe-4S ferredoxin-type domains span residues 7-35 (VGMV…SREG), 175-206 (TFMM…KREE), and 208-237 (GIVL…FNWK). The [4Fe-4S] cluster site is built by Cys16, Cys19, Cys22, Cys26, Cys184, Cys187, and Cys192. [3Fe-4S] cluster is bound by residues Cys196, Cys217, and Cys223. [4Fe-4S] cluster is bound by residues Cys227, Cys244, Cys247, Cys259, and Cys263.

In terms of assembly, dimer of heterotrimers each composed of an alpha, a beta and a gamma chain. Alpha and beta are catalytic chains; gamma chains are involved in binding the enzyme complex to the cytoplasmic membrane. [4Fe-4S] cluster is required as a cofactor. Requires [3Fe-4S] cluster as cofactor.

It is found in the cell membrane. The enzyme catalyses nitrate + a quinol = a quinone + nitrite + H2O. The nitrate reductase enzyme complex allows E.coli to use nitrate as an electron acceptor during anaerobic growth. The beta chain is an electron transfer unit containing four cysteine clusters involved in the formation of iron-sulfur centers. Electrons are transferred from the gamma chain to the molybdenum cofactor of the alpha subunit. This is Respiratory nitrate reductase 1 beta chain (narH) from Escherichia coli (strain K12).